The sequence spans 60 residues: Large ribosomal subunit protein bL32 (60 aa).

A compositionally biased stretch (basic residues) spans 1–23 (MACPKKKTSNAKRDQRRAHWRKQ). Positions 1–60 (MACPKKKTSNAKRDQRRAHWRKQAAREAQKALSLGKSVLSGRSNSFVYPTKEEEEGEDEE) are disordered.

This sequence belongs to the bacterial ribosomal protein bL32 family.

The protein is Large ribosomal subunit protein bL32 of Microcystis aeruginosa (strain NIES-843 / IAM M-2473).